A 213-amino-acid polypeptide reads, in one-letter code: Protein arginine N-methyltransferase SFM1 (213 aa).

2 positions are modified to phosphoserine: serine 204 and serine 207.

It belongs to the class IV-like SAM-binding methyltransferase superfamily. Protein arginine N-methyltransferase SFM1 family.

It localises to the cytoplasm. S-adenosyl-L-methionine-dependent protein-arginine N-methyltransferase that monomethylates ribosomal protein S3 (RPS3) at 'Arg-146'. This chain is Protein arginine N-methyltransferase SFM1, found in Saccharomyces cerevisiae (strain ATCC 204508 / S288c) (Baker's yeast).